A 610-amino-acid chain; its full sequence is tRNA uridine 5-carboxymethylaminomethyl modification enzyme MnmG (610 aa).

Position 14-19 (14-19 (GAGHAG)) interacts with FAD. 274 to 288 (GPRYCPSIEDKIVKF) contacts NAD(+).

The protein belongs to the MnmG family. Homodimer. Heterotetramer of two MnmE and two MnmG subunits. It depends on FAD as a cofactor.

It localises to the cytoplasm. Its function is as follows. NAD-binding protein involved in the addition of a carboxymethylaminomethyl (cmnm) group at the wobble position (U34) of certain tRNAs, forming tRNA-cmnm(5)s(2)U34. The chain is tRNA uridine 5-carboxymethylaminomethyl modification enzyme MnmG from Chlamydia muridarum (strain MoPn / Nigg).